The primary structure comprises 467 residues: ATP synthase subunit beta 1 (467 aa).

150–157 (GGAGVGKT) provides a ligand contact to ATP.

This sequence belongs to the ATPase alpha/beta chains family. F-type ATPases have 2 components, CF(1) - the catalytic core - and CF(0) - the membrane proton channel. CF(1) has five subunits: alpha(3), beta(3), gamma(1), delta(1), epsilon(1). CF(0) has three main subunits: a(1), b(2) and c(9-12). The alpha and beta chains form an alternating ring which encloses part of the gamma chain. CF(1) is attached to CF(0) by a central stalk formed by the gamma and epsilon chains, while a peripheral stalk is formed by the delta and b chains.

Its subcellular location is the cell inner membrane. It carries out the reaction ATP + H2O + 4 H(+)(in) = ADP + phosphate + 5 H(+)(out). Its function is as follows. Produces ATP from ADP in the presence of a proton gradient across the membrane. The catalytic sites are hosted primarily by the beta subunits. In Vibrio campbellii (strain ATCC BAA-1116), this protein is ATP synthase subunit beta 1.